We begin with the raw amino-acid sequence, 64 residues long: Beta-defensin 5 (64 aa).

A signal peptide spans 1 to 23; it reads MKIHYLLFAFLLVLLSPLAGVFS. 3 disulfides stabilise this stretch: cysteine 32-cysteine 60, cysteine 39-cysteine 53, and cysteine 43-cysteine 61.

The protein belongs to the beta-defensin family.

The protein localises to the secreted. Functionally, has antibacterial activity. The protein is Beta-defensin 5 (Defb5) of Mus musculus (Mouse).